The chain runs to 289 residues: ATP synthase gamma chain (289 aa).

It belongs to the ATPase gamma chain family. In terms of assembly, F-type ATPases have 2 components, CF(1) - the catalytic core - and CF(0) - the membrane proton channel. CF(1) has five subunits: alpha(3), beta(3), gamma(1), delta(1), epsilon(1). CF(0) has three main subunits: a, b and c.

It localises to the cell membrane. Functionally, produces ATP from ADP in the presence of a proton gradient across the membrane. The gamma chain is believed to be important in regulating ATPase activity and the flow of protons through the CF(0) complex. This is ATP synthase gamma chain from Mycoplasmoides gallisepticum (strain R(low / passage 15 / clone 2)) (Mycoplasma gallisepticum).